The sequence spans 338 residues: Tetraacyldisaccharide 4'-kinase (338 aa).

67–74 is an ATP binding site; the sequence is IAGGAGKT.

Belongs to the LpxK family.

The catalysed reaction is a lipid A disaccharide + ATP = a lipid IVA + ADP + H(+). It functions in the pathway glycolipid biosynthesis; lipid IV(A) biosynthesis; lipid IV(A) from (3R)-3-hydroxytetradecanoyl-[acyl-carrier-protein] and UDP-N-acetyl-alpha-D-glucosamine: step 6/6. Functionally, transfers the gamma-phosphate of ATP to the 4'-position of a tetraacyldisaccharide 1-phosphate intermediate (termed DS-1-P) to form tetraacyldisaccharide 1,4'-bis-phosphate (lipid IVA). The chain is Tetraacyldisaccharide 4'-kinase from Acidovorax sp. (strain JS42).